Consider the following 585-residue polypeptide: Squalene epoxidase 2, mitochondrial (585 aa).

The transit peptide at 1-45 (MKPFVIRNLPRFQSTLRSSLLYTNHRPSSRFSLSTRRFTTGATYI) directs the protein to the mitochondrion. A helical transmembrane segment spans residues 70–90 (AKIALDQFIASLFTFLLLYIL). Residues 132–133 (VA), 152–153 (ER), Arg-160, Arg-231, Val-247, Asp-409, and Met-422 contribute to the FAD site. 3 helical membrane-spanning segments follow: residues 493 to 513 (FDYL…LSGL), 520 to 540 (LVLH…LPFP), and 545 to 565 (FWLG…IIKA).

Belongs to the squalene monooxygenase family. Requires FAD as cofactor. In terms of tissue distribution, expressed mainly in inflorescences. Detected in seedlings, leaves, stems, and siliques.

It is found in the mitochondrion membrane. It carries out the reaction squalene + reduced [NADPH--hemoprotein reductase] + O2 = (S)-2,3-epoxysqualene + oxidized [NADPH--hemoprotein reductase] + H2O + H(+). It participates in terpene metabolism; lanosterol biosynthesis; lanosterol from farnesyl diphosphate: step 2/3. Its function is as follows. Catalyzes the stereospecific oxidation of squalene to (S)-2,3-epoxysqualene, and is considered to be a rate-limiting enzyme in steroid biosynthesis. Produces primarily oxidosqualene. In Arabidopsis thaliana (Mouse-ear cress), this protein is Squalene epoxidase 2, mitochondrial (SQE2).